Reading from the N-terminus, the 144-residue chain is MKQFYIVDSSMLPEVVGKVIAARALLQNGEVKQVSEAVKQVGISRGTYYKYKDYVFLPDPEMASRKAVISLMLHHDRGILSEVLTTMSQAQASIVTINQNIPIHNWASVVMSFDISALQGTLDDLVTKLGNIRGVSDVHLVSVE.

The ACT domain maps to Val-68 to Val-143.

It belongs to the UPF0735 family.

This is UPF0735 ACT domain-containing protein LCABL_12100 from Lacticaseibacillus casei (strain BL23) (Lactobacillus casei).